A 170-amino-acid polypeptide reads, in one-letter code: Adenine phosphoribosyltransferase (170 aa).

This sequence belongs to the purine/pyrimidine phosphoribosyltransferase family. As to quaternary structure, homodimer.

The protein resides in the cytoplasm. The catalysed reaction is AMP + diphosphate = 5-phospho-alpha-D-ribose 1-diphosphate + adenine. Its pathway is purine metabolism; AMP biosynthesis via salvage pathway; AMP from adenine: step 1/1. Functionally, catalyzes a salvage reaction resulting in the formation of AMP, that is energically less costly than de novo synthesis. This is Adenine phosphoribosyltransferase from Streptococcus suis (strain 98HAH33).